The primary structure comprises 1174 residues: DNA-directed RNA polymerase subunit beta' (1174 aa).

Residues Cys60, Cys62, Cys75, and Cys78 each coordinate Zn(2+). 3 residues coordinate Mg(2+): Asp450, Asp452, and Asp454. Residues Cys795, Cys869, Cys876, and Cys879 each contribute to the Zn(2+) site.

The protein belongs to the RNA polymerase beta' chain family. As to quaternary structure, the RNAP catalytic core consists of 2 alpha, 1 beta, 1 beta' and 1 omega subunit. When a sigma factor is associated with the core the holoenzyme is formed, which can initiate transcription. It depends on Mg(2+) as a cofactor. Requires Zn(2+) as cofactor.

It carries out the reaction RNA(n) + a ribonucleoside 5'-triphosphate = RNA(n+1) + diphosphate. Its function is as follows. DNA-dependent RNA polymerase catalyzes the transcription of DNA into RNA using the four ribonucleoside triphosphates as substrates. In Clostridium kluyveri (strain ATCC 8527 / DSM 555 / NBRC 12016 / NCIMB 10680 / K1), this protein is DNA-directed RNA polymerase subunit beta'.